A 173-amino-acid polypeptide reads, in one-letter code: Disulfide bond formation protein B (173 aa).

Over 1-11 (MNALQWSFRAQ) the chain is Cytoplasmic. Residues 12–28 (CLTGFLFCTGLLAYAIF) traverse the membrane as a helical segment. Residues 29 to 46 (LQLHQGLEPCPLCIFQRI) are Periplasmic-facing. Cysteines 38 and 41 form a disulfide. A helical membrane pass occupies residues 47 to 63 (AFAVLGILFLIAGLYNS). Topologically, residues 64–70 (SNVYTRK) are cytoplasmic. Residues 71–88 (AYGLLIFLTAIIGTGIAG) traverse the membrane as a helical segment. Over 89 to 145 (RHVWVQLMPHNTISSCGSPLSFLSETMGPFEVFRTVLTGTSNCGNIDWRFLGLSMPM) the chain is Periplasmic. The cysteines at positions 104 and 131 are disulfide-linked. The chain crosses the membrane as a helical span at residues 146 to 164 (WSMFWFVALALLGLLVGFK). The Cytoplasmic segment spans residues 165–173 (AERRKPLFS).

This sequence belongs to the DsbB family.

The protein localises to the cell inner membrane. Its function is as follows. Required for disulfide bond formation in some periplasmic proteins. Acts by oxidizing the DsbA protein. The protein is Disulfide bond formation protein B of Xylella fastidiosa (strain Temecula1 / ATCC 700964).